Reading from the N-terminus, the 216-residue chain is U1 small nuclear ribonucleoprotein A (216 aa).

2 RRM domains span residues 7–86 (QTIY…YSKS) and 142–216 (QILF…FAKK). The interval 97-142 (TFKERPKKVKPPKPAPGTDEKKDKKKKPSSAENSNPNAQTEQPPNQ) is disordered. Over residues 126-142 (SAENSNPNAQTEQPPNQ) the composition is skewed to polar residues.

The protein belongs to the RRM U1 A/B'' family. Belongs to the spliceosome where it is associated with snRNP U1. Interacts with the SMN complex.

The protein localises to the nucleus. In terms of biological role, binds stem loop II of U1 snRNA. It is the first snRNP to interact with pre-mRNA. This interaction is required for the subsequent binding of U2 snRNP and the U4/U6/U5 tri-snRNP. Plays a role in regulating sex-lethal splicing. The protein is U1 small nuclear ribonucleoprotein A (snf) of Drosophila melanogaster (Fruit fly).